The following is a 334-amino-acid chain: Malate dehydrogenase, cytoplasmic (334 aa).

G11–A17 serves as a coordination point for NAD(+). Residues R92 and R98 each contribute to the substrate site. NAD(+)-binding positions include N105, Q112, and V129–N131. 2 residues coordinate substrate: N131 and R162. H187 serves as the catalytic Proton acceptor.

This sequence belongs to the LDH/MDH superfamily. MDH type 2 family. Homodimer.

It localises to the cytoplasm. It is found in the cytosol. The enzyme catalyses (S)-malate + NAD(+) = oxaloacetate + NADH + H(+). It catalyses the reaction (S)-2-hydroxyglutarate + NAD(+) = 2-oxoglutarate + NADH + H(+). Catalyzes the reduction of aromatic alpha-keto acids in the presence of NADH. Plays essential roles in the malate-aspartate shuttle and the tricarboxylic acid cycle, important in mitochondrial NADH supply for oxidative phosphorylation. Catalyzes the reduction of 2-oxoglutarate to 2-hydroxyglutarate, leading to elevated reactive oxygen species (ROS). This chain is Malate dehydrogenase, cytoplasmic (MDH1), found in Gallus gallus (Chicken).